The sequence spans 589 residues: Probable translation initiation factor IF-2 (589 aa).

Positions 3–224 (VRSPFVVVMG…AGVSQRFIPR (222 aa)) constitute a tr-type G domain. The G1 stretch occupies residues 12 to 19 (GHVDVGKT). Position 12 to 19 (12 to 19 (GHVDVGKT)) interacts with GTP. Positions 37 to 41 (MITQH) are G2. The segment at 78 to 81 (DTPG) is G3. GTP-binding positions include 78-82 (DTPGH) and 132-135 (NKLD). Residues 132 to 135 (NKLD) are G4. The tract at residues 200–202 (SAV) is G5.

Belongs to the TRAFAC class translation factor GTPase superfamily. Classic translation factor GTPase family. IF-2 subfamily.

In terms of biological role, function in general translation initiation by promoting the binding of the formylmethionine-tRNA to ribosomes. Seems to function along with eIF-2. The chain is Probable translation initiation factor IF-2 from Pyrobaculum neutrophilum (strain DSM 2338 / JCM 9278 / NBRC 100436 / V24Sta) (Thermoproteus neutrophilus).